The sequence spans 46 residues: Large ribosomal subunit protein bL36B (46 aa).

This sequence belongs to the bacterial ribosomal protein bL36 family.

This is Large ribosomal subunit protein bL36B from Cronobacter sakazakii (strain ATCC BAA-894) (Enterobacter sakazakii).